A 121-amino-acid chain; its full sequence is Putative viral protein-binding protein C1 (121 aa).

Residues proline 21–serine 57 are disordered.

Interacts with core protein of hepatitis B virus.

The sequence is that of Putative viral protein-binding protein C1 from Homo sapiens (Human).